The chain runs to 542 residues: MAKQILFREEARKALEQGINQLADAVKVTIGPKGRNVLLEKKFGAPQIVNDGVTIAKEIELADPLENTGAQLMREVATKTNDVAGDGTTTATILAQSMVQEGLKNISAGANPVALRRGIEKTTAYLVEQIAAQAKPVEGRKNIAEVATISAGNDPEVGEMIARAMDAVGRDGVITVEESKSLETQLEVVEGMQFDRGYISPYFVTDTERMVAEYENAYLLITSNKLSNLQDLVPVLERVAREGRPLLVIAEDVEGEALATLVVNKLRGVLNAVAVKAPAFGDRRKAMLEDIAILTGGQLISEDIGIKLENVTLDMMGVARKITVTKDKTTIVTDGSTKAAVEKRVAQIRKQLETTDSEYDREKLQERIAKLAGGVAVIKVGAATETELKDRKLRIEDALNATRAAVEEGIVPGGGATLLHLSKGIPAFKANLNAEEQVGADIVCRALQAPLYQIAHNAGLEGSVVVEKVLEKEMPFGFDALTGTYVDMFAQGIVDPAKVVRSALQNAASIAAMYLTTEAIVVEKPEPKTKTGASRSGGAGMM.

ATP-binding positions include 29–32 (TIGP), 86–90 (DGTTT), Gly-414, 479–481 (DAL), and Asp-495.

Belongs to the chaperonin (HSP60) family. In terms of assembly, forms a cylinder of 14 subunits composed of two heptameric rings stacked back-to-back. Interacts with the co-chaperonin GroES.

It localises to the cytoplasm. The catalysed reaction is ATP + H2O + a folded polypeptide = ADP + phosphate + an unfolded polypeptide.. Its function is as follows. Together with its co-chaperonin GroES, plays an essential role in assisting protein folding. The GroEL-GroES system forms a nano-cage that allows encapsulation of the non-native substrate proteins and provides a physical environment optimized to promote and accelerate protein folding. The polypeptide is Chaperonin GroEL 1 (Synechococcus sp. (strain JA-3-3Ab) (Cyanobacteria bacterium Yellowstone A-Prime)).